Here is a 198-residue protein sequence, read N- to C-terminus: MKVFGISGSPRLQGTHFAVNYALNYLKEKGAEVRYFSVSRKKINFCLHCDYCIKKKEGCIHKDDMEEVYENLIWADGVIIGTPVYQGNVTGQLKTLMDRCRAILAKNPKVLRGRVGMAIAVGGDRNGGQEIALRTIHDFFIINEMIPVGGGSFGANLGATFWSKDRGKKGVEEDEEGLRVLRKTLNRFYEVLKEKRGL.

Residues C46, C49, C52, and C59 each contribute to the [4Fe-4S] cluster site.

This sequence belongs to the SsuE family. Isf subfamily. Homodimer. FMN serves as cofactor. The cofactor is [4Fe-4S] cluster.

Functionally, redox-active protein probably involved in electron transport. In Methanocaldococcus jannaschii (strain ATCC 43067 / DSM 2661 / JAL-1 / JCM 10045 / NBRC 100440) (Methanococcus jannaschii), this protein is Iron-sulfur flavoprotein MJ0731.